Reading from the N-terminus, the 886-residue chain is Adhesion G protein-coupled receptor E1 (886 aa).

An N-terminal signal peptide occupies residues 1–20 (MRGFNLLLFWGCCVMHSWEG). Residues 21 to 599 (HIRPTRKPNT…IMASGELTMD (579 aa)) lie on the Extracellular side of the membrane. An EGF-like 1 domain is found at 31–79 (KGNNCRDSTLCPAYATCTNTVDSYYCACKQGFLSSNGQNHFKDPGVRCK). 18 cysteine pairs are disulfide-bonded: C35–C47, C41–C56, C58–C78, C84–C97, C91–C106, C108–C130, C136–C148, C142–C157, C159–C170, C176–C188, C182–C197, C199–C219, C225–C235, C229–C244, C246–C266, C272–C285, C279–C294, and C296–C315. An EGF-like 2; calcium-binding domain is found at 80–131 (DIDECSQSPQPCGPNSSCKNLSGRYKCSCLDGFSSPTGNDWVPGKPGNFSCT). Residues N94, N99, and N127 are each glycosylated (N-linked (GlcNAc...) asparagine). The EGF-like 3; calcium-binding domain maps to 132-171 (DINECLTSSVCPEHSDCVNSMGSYSCSCQVGFISRNSTCE). The N-linked (GlcNAc...) asparagine glycan is linked to N167. The 49-residue stretch at 172-220 (DVDECADPRACPEHATCNNTVGNYSCFCNPGFESSSGHLSFQGLKASCE) folds into the EGF-like 4; calcium-binding domain. N189 and N194 each carry an N-linked (GlcNAc...) asparagine glycan. The EGF-like 5; calcium-binding domain occupies 221 to 267 (DIDECTEMCPINSTCTNTPGSYFCTCHPGFAPSNGQLNFTDQGVECR). N232 and N258 each carry an N-linked (GlcNAc...) asparagine glycan. The EGF-like 6; calcium-binding domain maps to 268–316 (DIDECRQDPSTCGPNSICTNALGSYSCGCIAGFHPNPEGSQKDGNFSCQ). 4 N-linked (GlcNAc...) asparagine glycosylation sites follow: N312, N366, N375, and N448. One can recognise a GAIN-B domain in the interval 431–597 (EYLDIESKVI…AVIMASGELT (167 aa)). 2 disulfides stabilise this stretch: C550-C579 and C567-C581. The interval 550–597 (CVSWSTDVKGGRWTSFGCVILEASETYTICSCNQMANLAVIMASGELT) is GPS. The helical transmembrane segment at 600–627 (FSLYIISHVGIIISLVCLVLAIATFLLC) threads the bilayer. At 628 to 634 (RSIRNHN) the chain is on the cytoplasmic side. A helical membrane pass occupies residues 635 to 656 (TYLHLHLCVCLLLAKTLFLAGI). The Extracellular portion of the chain corresponds to 657–666 (HKTDNKMGCA). A helical membrane pass occupies residues 667-690 (IIAGFLHYLFLACFFWMLVEAVIL). Residues 691–709 (FLMVRNLKVVNYFSSRNIK) are Cytoplasmic-facing. Residues 710-731 (MLHICAFGYGLPMLVVVISASV) form a helical membrane-spanning segment. At 732–747 (QPQGYGMHNRCWLNTE) the chain is on the extracellular side. A helical transmembrane segment spans residues 748 to 776 (TGFIWSFLGPVCTVIVINSLLLTWTLWIL). Over 777 to 794 (RQRLSSVNAEVSTLKDTR) the chain is Cytoplasmic. The helical transmembrane segment at 795–814 (LLTFKAFAQLFILGCSWVLG) threads the bilayer. At 815–829 (IFQIGPVAGVMAYLF) the chain is on the extracellular side. Residues 830–852 (TIINSLQGAFIFLIHCLLNGQVR) form a helical membrane-spanning segment. At 853–886 (EEYKRWITGKTKPSSQSQTSRILLSSMPSASKTG) the chain is on the cytoplasmic side. A disordered region spans residues 862–886 (KTKPSSQSQTSRILLSSMPSASKTG). Residues 863–886 (TKPSSQSQTSRILLSSMPSASKTG) show a composition bias toward polar residues.

Belongs to the G-protein coupled receptor 2 family. Adhesion G-protein coupled receptor (ADGR) subfamily. In terms of tissue distribution, expression is restricted to eosinophils.

The protein resides in the cell membrane. Functionally, orphan receptor involved in cell adhesion and probably in cell-cell interactions specifically involving cells of the immune system. May play a role in regulatory T-cells (Treg) development. The polypeptide is Adhesion G protein-coupled receptor E1 (Homo sapiens (Human)).